We begin with the raw amino-acid sequence, 371 residues long: N-acetyldiaminopimelate deacetylase (371 aa).

Residue D68 is part of the active site. The Proton acceptor role is filled by E127.

It belongs to the peptidase M20A family. N-acetyldiaminopimelate deacetylase subfamily.

The catalysed reaction is N-acetyl-(2S,6S)-2,6-diaminopimelate + H2O = (2S,6S)-2,6-diaminopimelate + acetate. It participates in amino-acid biosynthesis; L-lysine biosynthesis via DAP pathway; LL-2,6-diaminopimelate from (S)-tetrahydrodipicolinate (acetylase route): step 3/3. Its function is as follows. Catalyzes the conversion of N-acetyl-diaminopimelate to diaminopimelate and acetate. The chain is N-acetyldiaminopimelate deacetylase from Listeria monocytogenes serotype 4a (strain HCC23).